We begin with the raw amino-acid sequence, 485 residues long: Cysteine--tRNA ligase (485 aa).

C27 serves as a coordination point for Zn(2+). The 'HIGH' region signature appears at 29-39 (ITAYDLCHIGH). Residues C208, H233, and E237 each contribute to the Zn(2+) site. Positions 265–269 (KMSKS) match the 'KMSKS' region motif. K268 is an ATP binding site.

Belongs to the class-I aminoacyl-tRNA synthetase family. In terms of assembly, monomer. Zn(2+) serves as cofactor.

It localises to the cytoplasm. It carries out the reaction tRNA(Cys) + L-cysteine + ATP = L-cysteinyl-tRNA(Cys) + AMP + diphosphate. The polypeptide is Cysteine--tRNA ligase (Nitratidesulfovibrio vulgaris (strain DP4) (Desulfovibrio vulgaris)).